A 245-amino-acid chain; its full sequence is 1-(5-phosphoribosyl)-5-[(5-phosphoribosylamino)methylideneamino] imidazole-4-carboxamide isomerase (245 aa).

The active-site Proton acceptor is D7. D129 functions as the Proton donor in the catalytic mechanism.

This sequence belongs to the HisA/HisF family.

It localises to the cytoplasm. The catalysed reaction is 1-(5-phospho-beta-D-ribosyl)-5-[(5-phospho-beta-D-ribosylamino)methylideneamino]imidazole-4-carboxamide = 5-[(5-phospho-1-deoxy-D-ribulos-1-ylimino)methylamino]-1-(5-phospho-beta-D-ribosyl)imidazole-4-carboxamide. It functions in the pathway amino-acid biosynthesis; L-histidine biosynthesis; L-histidine from 5-phospho-alpha-D-ribose 1-diphosphate: step 4/9. In Aliivibrio salmonicida (strain LFI1238) (Vibrio salmonicida (strain LFI1238)), this protein is 1-(5-phosphoribosyl)-5-[(5-phosphoribosylamino)methylideneamino] imidazole-4-carboxamide isomerase.